The chain runs to 121 residues: Large ribosomal subunit protein uL18 (121 aa).

This sequence belongs to the universal ribosomal protein uL18 family. As to quaternary structure, part of the 50S ribosomal subunit; part of the 5S rRNA/L5/L18/L25 subcomplex. Contacts the 5S and 23S rRNAs.

In terms of biological role, this is one of the proteins that bind and probably mediate the attachment of the 5S RNA into the large ribosomal subunit, where it forms part of the central protuberance. This is Large ribosomal subunit protein uL18 from Thermoanaerobacter pseudethanolicus (strain ATCC 33223 / 39E) (Clostridium thermohydrosulfuricum).